A 319-amino-acid polypeptide reads, in one-letter code: Acyl-coenzyme A thioesterase 8 (319 aa).

Residues methionine 1–proline 20 are disordered. Residues aspartate 232, serine 254, and glutamine 304 each act as charge relay system in the active site. Positions serine 317–leucine 319 match the Microbody targeting signal motif.

This sequence belongs to the C/M/P thioester hydrolase family. In terms of assembly, homodimer. (Microbial infection) Interacts with human immunodeficiency virus (HIV-1) Nef (via middle region); this interaction enhances ACOT8 Acyl-CoA thioesterase activity and occurs in a Nef myristoylation-independent manner. According to a second report, the interaction with HIV-1 Nef occurs in a Nef myristoylation-independent manner but does not enhance ACOT8 Acyl-CoA thioesterase activity. In terms of tissue distribution, detected in a T-cell line (at protein level). Ubiquitous.

It is found in the peroxisome matrix. It carries out the reaction choloyl-CoA + H2O = cholate + CoA + H(+). It catalyses the reaction chenodeoxycholoyl-CoA + H2O = chenodeoxycholate + CoA + H(+). The catalysed reaction is acetyl-CoA + H2O = acetate + CoA + H(+). The enzyme catalyses butanoyl-CoA + H2O = butanoate + CoA + H(+). It carries out the reaction 2-methylpropanoyl-CoA + H2O = 2-methylpropanoate + CoA + H(+). It catalyses the reaction hexanoyl-CoA + H2O = hexanoate + CoA + H(+). The catalysed reaction is octanoyl-CoA + H2O = octanoate + CoA + H(+). The enzyme catalyses decanoyl-CoA + H2O = decanoate + CoA + H(+). It carries out the reaction dodecanoyl-CoA + H2O = dodecanoate + CoA + H(+). It catalyses the reaction tetradecanoyl-CoA + H2O = tetradecanoate + CoA + H(+). The catalysed reaction is hexadecanoyl-CoA + H2O = hexadecanoate + CoA + H(+). The enzyme catalyses octadecanoyl-CoA + H2O = octadecanoate + CoA + H(+). It carries out the reaction malonyl-CoA + H2O = malonate + CoA + H(+). It catalyses the reaction acetoacetyl-CoA + H2O = acetoacetate + CoA + H(+). The catalysed reaction is propanoyl-CoA + H2O = propanoate + CoA + H(+). The enzyme catalyses succinyl-CoA + H2O = succinate + CoA + H(+). It carries out the reaction glutaryl-CoA + H2O = glutarate + CoA + H(+). It catalyses the reaction hexanedioyl-CoA + H2O = hexanedioate + CoA + H(+). The catalysed reaction is octanedioyl-CoA + H2O = octanedioate + CoA + H(+). The enzyme catalyses decanedioyl-CoA + H2O = decanedioate + CoA + H(+). It carries out the reaction dodecanedioyl-CoA + H2O = dodecanedioate + CoA + H(+). It catalyses the reaction (9Z)-tetradecenoyl-CoA + H2O = (9Z)-tetradecenoate + CoA + H(+). The catalysed reaction is (9Z)-hexadecenoyl-CoA + H2O = (9Z)-hexadecenoate + CoA + H(+). The enzyme catalyses (9Z)-octadecenoyl-CoA + H2O = (9Z)-octadecenoate + CoA + H(+). It carries out the reaction (9Z,12Z)-octadecadienoyl-CoA + H2O = (9Z,12Z)-octadecadienoate + CoA + H(+). It catalyses the reaction eicosanoyl-CoA + H2O = eicosanoate + CoA + H(+). The catalysed reaction is (5Z,8Z,11Z,14Z)-eicosatetraenoyl-CoA + H2O = (5Z,8Z,11Z,14Z)-eicosatetraenoate + CoA + H(+). The enzyme catalyses 4,8-dimethylnonanoyl-CoA + H2O = 4,8-dimethylnonanoate + CoA + H(+). It carries out the reaction 2,6-dimethylheptanoyl-CoA + H2O = 2,6-dimethylheptanoate + CoA + H(+). It catalyses the reaction (3S)-3-hydroxy-3-methylglutaryl-CoA + H2O = 3-hydroxy-3-methylglutarate + CoA + H(+). The catalysed reaction is 3alpha,7alpha,12alpha-trihydroxy-5beta-cholestan-26-oyl-CoA + H2O = 3alpha,7alpha,12alpha-trihydroxy-5beta-cholestan-26-oate + CoA + H(+). The enzyme catalyses 2-methyloctadecanoyl-CoA + H2O = 2-methyloctadecanoate + CoA + H(+). It carries out the reaction prostaglandin F2alpha-CoA + H2O = prostaglandin F2alpha + CoA + H(+). It functions in the pathway lipid metabolism; fatty acid metabolism. Inhibited by CoASH (IC(50)=10-15 uM). Also inhibited by cysteine-reactive agents. Catalyzes the hydrolysis of acyl-CoAs into free fatty acids and coenzyme A (CoASH), regulating their respective intracellular levels. Displays no strong substrate specificity with respect to the carboxylic acid moiety of Acyl-CoAs. Hydrolyzes medium length (C2 to C20) straight-chain, saturated and unsaturated acyl-CoAS but is inactive towards substrates with longer aliphatic chains. Moreover, it catalyzes the hydrolysis of CoA esters of bile acids, such as choloyl-CoA and chenodeoxycholoyl-CoA and competes with bile acid CoA:amino acid N-acyltransferase (BAAT). Is also able to hydrolyze CoA esters of dicarboxylic acids. It is involved in the metabolic regulation of peroxisome proliferation. Functionally, (Microbial infection) May mediate Nef-induced down-regulation of CD4 cell-surface expression. In Homo sapiens (Human), this protein is Acyl-coenzyme A thioesterase 8 (ACOT8).